Reading from the N-terminus, the 120-residue chain is Small ribosomal subunit protein bS16 (120 aa).

Basic and acidic residues predominate over residues 84 to 110; the sequence is KREVKSNPEKAKPGKRAQERAAEKAQK. Positions 84–120 are disordered; it reads KREVKSNPEKAKPGKRAQERAAEKAQKAADAAAATAE. Positions 111-120 are enriched in low complexity; it reads AADAAAATAE.

Belongs to the bacterial ribosomal protein bS16 family.

This chain is Small ribosomal subunit protein bS16, found in Rhizobium rhizogenes (strain K84 / ATCC BAA-868) (Agrobacterium radiobacter).